Reading from the N-terminus, the 418-residue chain is 1-deoxy-D-xylulose 5-phosphate reductoisomerase (418 aa).

Residues T32, G33, S34, I35, and N150 each contribute to the NADPH site. Position 151 (K151) interacts with 1-deoxy-D-xylulose 5-phosphate. E152 contacts NADPH. Residue D174 coordinates Mn(2+). 4 residues coordinate 1-deoxy-D-xylulose 5-phosphate: S175, E176, S200, and H223. Residue E176 participates in Mn(2+) binding. G229 is a binding site for NADPH. 1-deoxy-D-xylulose 5-phosphate is bound by residues S236, N241, K242, and E245. E245 serves as a coordination point for Mn(2+).

This sequence belongs to the DXR family. Mg(2+) serves as cofactor. The cofactor is Mn(2+).

The enzyme catalyses 2-C-methyl-D-erythritol 4-phosphate + NADP(+) = 1-deoxy-D-xylulose 5-phosphate + NADPH + H(+). It functions in the pathway isoprenoid biosynthesis; isopentenyl diphosphate biosynthesis via DXP pathway; isopentenyl diphosphate from 1-deoxy-D-xylulose 5-phosphate: step 1/6. Its function is as follows. Catalyzes the NADPH-dependent rearrangement and reduction of 1-deoxy-D-xylulose-5-phosphate (DXP) to 2-C-methyl-D-erythritol 4-phosphate (MEP). The polypeptide is 1-deoxy-D-xylulose 5-phosphate reductoisomerase (Streptomyces coelicolor (strain ATCC BAA-471 / A3(2) / M145)).